A 793-amino-acid chain; its full sequence is Sucrose synthase (793 aa).

The GT-B glycosyltransferase stretch occupies residues 259-738; sequence MILNIAIISP…AIKRVTEKYS (480 aa).

The protein belongs to the glycosyltransferase 1 family. In terms of assembly, homotetramer.

The enzyme catalyses an NDP-alpha-D-glucose + D-fructose = a ribonucleoside 5'-diphosphate + sucrose + H(+). In terms of biological role, catalyzes the reversible conversion of sucrose and a nucleotide disphosphate (NDP) into fructose and NDP-glucose; although the reaction is freely reversible in vitro, the physiological reaction seems to be sucrose cleavage. Unlike characterized plant enzymes prefers ADP as a cosubstrate, whereas plants prefer UDP. Its preference for ADP over UDP suggests it may directly link sucrose and glycogen metabolism. The sequence is that of Sucrose synthase from Melioribacter roseus (strain JCM 17771 / P3M-2).